The following is a 98-amino-acid chain: MSQGHRSEEVVRVNLLFFAKSRELVGTSSLDNFPLATSGGHLSGSAVLGTICERFPELVAIRDSVIIAHNEQYCEDLTEPISLADGDEIAVIPPIAGG.

Glycine 98 carries the 1-thioglycine; alternate modification. Glycine 98 is modified (glycyl adenylate; alternate).

It belongs to the MoaD family. MOCS2A subfamily. In terms of assembly, heterotetramer; composed of 2 small (MOCS2A) and 2 large (MOCS2B) subunits. Post-translationally, C-terminal thiocarboxylation occurs in 2 steps, it is first acyl-adenylated (-COAMP) via the hesA/moeB/thiF part of MOCS3, then thiocarboxylated (-COSH) via the rhodanese domain of MOCS3.

It localises to the cytoplasm. It participates in cofactor biosynthesis; molybdopterin biosynthesis. Acts as a sulfur carrier required for molybdopterin biosynthesis. Component of the molybdopterin synthase complex that catalyzes the conversion of precursor Z into molybdopterin by mediating the incorporation of 2 sulfur atoms into precursor Z to generate a dithiolene group. In the complex, serves as sulfur donor by being thiocarboxylated (-COSH) at its C-terminus by MOCS3. After interaction with MOCS2B, the sulfur is then transferred to precursor Z to form molybdopterin. The chain is Molybdopterin synthase sulfur carrier subunit from Aedes aegypti (Yellowfever mosquito).